The sequence spans 56 residues: Large ribosomal subunit protein bL33 (56 aa).

Belongs to the bacterial ribosomal protein bL33 family.

The sequence is that of Large ribosomal subunit protein bL33 from Vibrio campbellii (strain ATCC BAA-1116).